The sequence spans 525 residues: Cytochrome P450 4V2 (525 aa).

A helical membrane pass occupies residues 13 to 33 (LLLWGAASAVSLAGASLVLSL). Heme is bound by residues glutamate 329 and cysteine 467.

This sequence belongs to the cytochrome P450 family. The cofactor is heme.

It localises to the endoplasmic reticulum membrane. The catalysed reaction is dodecanoate + reduced [NADPH--hemoprotein reductase] + O2 = 12-hydroxydodecanoate + oxidized [NADPH--hemoprotein reductase] + H2O + H(+). The enzyme catalyses tetradecanoate + reduced [NADPH--hemoprotein reductase] + O2 = 14-hydroxytetradecanoate + oxidized [NADPH--hemoprotein reductase] + H2O + H(+). It catalyses the reaction hexadecanoate + reduced [NADPH--hemoprotein reductase] + O2 = 16-hydroxyhexadecanoate + oxidized [NADPH--hemoprotein reductase] + H2O + H(+). It carries out the reaction (5Z,8Z,11Z,14Z,17Z)-eicosapentaenoate + reduced [NADPH--hemoprotein reductase] + O2 = 20-hydroxy-(5Z,8Z,11Z,14Z,17Z)-eicosapentaenoate + oxidized [NADPH--hemoprotein reductase] + H2O + H(+). The catalysed reaction is (4Z,7Z,10Z,13Z,16Z,19Z)-docosahexaenoate + reduced [NADPH--hemoprotein reductase] + O2 = 22-hydroxy-(4Z,7Z,10Z,13Z,16Z,19Z)-docosahexaenoate + oxidized [NADPH--hemoprotein reductase] + H2O + H(+). The protein operates within lipid metabolism; fatty acid metabolism. With respect to regulation, inhibited by N-hydroxy-N'-(4-n-butyl-2-methylphenyl formamidine)(HET0016) with an IC(50) of 38 nM. Its function is as follows. A cytochrome P450 monooxygenase involved in fatty acid metabolism in the eye. Catalyzes the omega-hydroxylation of polyunsaturated fatty acids (PUFAs) docosahexaenoate (DHA) and its precursor eicosapentaenoate (EPA), and may contribute to the homeostasis of these retinal PUFAs. Omega hydroxylates saturated fatty acids such as laurate, myristate and palmitate, the catalytic efficiency decreasing in the following order: myristate &gt; laurate &gt; palmitate (C14&gt;C12&gt;C16). Mechanistically, uses molecular oxygen inserting one oxygen atom into a substrate, and reducing the second into a water molecule, with two electrons provided by NADPH via cytochrome P450 reductase (CPR; NADPH-ferrihemoprotein reductase). This Pongo abelii (Sumatran orangutan) protein is Cytochrome P450 4V2 (CYP4V2).